A 706-amino-acid polypeptide reads, in one-letter code: Elongation factor G (706 aa).

Residues 15 to 291 form the tr-type G domain; sequence LKTRNIGISA…GVLDYLASPV (277 aa). GTP contacts are provided by residues 24–31, 91–95, and 145–148; these read AHIDSGKT, DTPGH, and NKLD.

It belongs to the TRAFAC class translation factor GTPase superfamily. Classic translation factor GTPase family. EF-G/EF-2 subfamily.

It is found in the cytoplasm. Functionally, catalyzes the GTP-dependent ribosomal translocation step during translation elongation. During this step, the ribosome changes from the pre-translocational (PRE) to the post-translocational (POST) state as the newly formed A-site-bound peptidyl-tRNA and P-site-bound deacylated tRNA move to the P and E sites, respectively. Catalyzes the coordinated movement of the two tRNA molecules, the mRNA and conformational changes in the ribosome. In Leptospira interrogans serogroup Icterohaemorrhagiae serovar copenhageni (strain Fiocruz L1-130), this protein is Elongation factor G.